The following is a 243-amino-acid chain: Benzil reductase ((S)-benzoin forming) (243 aa).

Ile6, Asn80, Tyr147, Lys151, and Thr184 together coordinate NADP(+). Residue Tyr147 is the Proton acceptor of the active site.

It belongs to the short-chain dehydrogenases/reductases (SDR) family.

It localises to the cytoplasm. The catalysed reaction is (S)-benzoin + NADP(+) = benzil + NADPH + H(+). In terms of biological role, reduces benzil stereospecifically to (S)-benzoin. The chain is Benzil reductase ((S)-benzoin forming) (yueD) from Bacillus subtilis (strain 168).